Here is a 948-residue protein sequence, read N- to C-terminus: MSLPSALLPTAELHYQSLISEHPHIANWPSSVLNQLRYVLGLSQFVAQTLQRDDPLCQVLPSLLAKPSREQYYRSELAQWLAECQDEAVAQKRLRQFRNQEMVYIAWRDFCASWTLEESLSHLSQLAEALIFESYQWLYQRCCLEMGTPCNAQGEAQPMLIIGMGKLGGGELNFSSDIDLIFTYPENGETQGARRSIANAQFFTRLGQRLIKLLDQSTPDGFCYRVDMRLRPFGDSGPLAMSYAALEDYYQEQGRDWERYAMIKARVMGREMYPQYQELRQMLRPFVFRRYIDFSAIQSLRRMKSMISSEVRRRGLSNNIKLGAGGIREVEFIAQVFQLIRGGREPSLRKRGLLETLDAIAELELLTREQVQDLRDAYRFLRRLENLLQAMADKQTQTLPDKEDDQLRLSIAIGLADWPSLQREVSEHMQRVHRVFATLIGEEDEEEEHTVARHFHELWDMAHKPEVIEHIIEQDLGLSDAGEQIRTITQFKDDLAKRTIGPRGREVLNRLMPKVYQAVFAHPDAEFGLSRVLALLHSIATRTTYLELLDEHPAALVQLVRLCTASPMISEQLARYPILLDELIDPQHLYNPIPLESYQTELRDFLARIPEEDMEQQMEGLRQFKQISILRIAAADIAGVLPVMKVSDHLTYLAEAIVEAVVSQAWLQVSSKYGEPTHLKHRDGRGFAVVGYGKVGGWELGYNSDLDIVFMHDCPVEVNTDGEKSIDGRQFYLRLAQRIIHIFSTRTASGILYEVDTRLRPSGASGLLVSPTDAFDEYQRQEAWTWEHQALVRARMIYGDAPLQQAFANTRHQILCLPREEHKLKQEVVEMRIKMRDHLGGKKAGRFMLKQDEGGITDIEFLAQYLVLRFSHQQPKLTRWSDNVRIFESLMNHQVMSESQALALTHAYTSMRDQIHRRNLLNQSADVRDSQFVVEREQVIQAWQQWLG.

The interval 1–444 is adenylyl removase; that stretch reads MSLPSALLPT…VFATLIGEED (444 aa). Residues 452 to 948 are adenylyl transferase; the sequence is ARHFHELWDM…VIQAWQQWLG (497 aa).

Belongs to the GlnE family. Mg(2+) is required as a cofactor.

The catalysed reaction is [glutamine synthetase]-O(4)-(5'-adenylyl)-L-tyrosine + phosphate = [glutamine synthetase]-L-tyrosine + ADP. It catalyses the reaction [glutamine synthetase]-L-tyrosine + ATP = [glutamine synthetase]-O(4)-(5'-adenylyl)-L-tyrosine + diphosphate. Involved in the regulation of glutamine synthetase GlnA, a key enzyme in the process to assimilate ammonia. When cellular nitrogen levels are high, the C-terminal adenylyl transferase (AT) inactivates GlnA by covalent transfer of an adenylyl group from ATP to specific tyrosine residue of GlnA, thus reducing its activity. Conversely, when nitrogen levels are low, the N-terminal adenylyl removase (AR) activates GlnA by removing the adenylyl group by phosphorolysis, increasing its activity. The regulatory region of GlnE binds the signal transduction protein PII (GlnB) which indicates the nitrogen status of the cell. This chain is Bifunctional glutamine synthetase adenylyltransferase/adenylyl-removing enzyme, found in Vibrio cholerae serotype O1 (strain ATCC 39315 / El Tor Inaba N16961).